A 318-amino-acid polypeptide reads, in one-letter code: Formimidoylglutamase (318 aa).

The Mn(2+) site is built by His-130, Asp-155, His-157, Asp-159, Asp-246, and Asp-248.

Belongs to the arginase family. Requires Mn(2+) as cofactor.

The enzyme catalyses N-formimidoyl-L-glutamate + H2O = formamide + L-glutamate. It functions in the pathway amino-acid degradation; L-histidine degradation into L-glutamate; L-glutamate from N-formimidoyl-L-glutamate (hydrolase route): step 1/1. Functionally, catalyzes the conversion of N-formimidoyl-L-glutamate to L-glutamate and formamide. The chain is Formimidoylglutamase from Photorhabdus laumondii subsp. laumondii (strain DSM 15139 / CIP 105565 / TT01) (Photorhabdus luminescens subsp. laumondii).